The primary structure comprises 275 residues: Large ribosomal subunit protein uL2 (275 aa).

2 disordered regions span residues 28–49 (APHA…HGRI) and 224–246 (AMNP…NPHP).

This sequence belongs to the universal ribosomal protein uL2 family. Part of the 50S ribosomal subunit. Forms a bridge to the 30S subunit in the 70S ribosome.

Functionally, one of the primary rRNA binding proteins. Required for association of the 30S and 50S subunits to form the 70S ribosome, for tRNA binding and peptide bond formation. It has been suggested to have peptidyltransferase activity; this is somewhat controversial. Makes several contacts with the 16S rRNA in the 70S ribosome. The protein is Large ribosomal subunit protein uL2 of Stenotrophomonas maltophilia (strain R551-3).